Reading from the N-terminus, the 303-residue chain is HTH-type transcriptional regulator LinR (303 aa).

Residues 6–63 enclose the HTH lysR-type domain; it reads LDFRHLVLLDALLKRHSVSAAARELDLPQPTASHGLARLRKALGDPLLVRARDGMEPT. A DNA-binding region (H-T-H motif) is located at residues 23–42; the sequence is VSAAARELDLPQPTASHGLA.

Belongs to the LysR transcriptional regulatory family.

In terms of biological role, positively regulates the transcription of the linD and linE genes that are involved in gamma-hexachlorocyclohexane (gamma-HCH or lindane) degradation. This degradation pathway allows S.japonicum UT26 to grow on gamma-HCH as the sole source of carbon and energy. The polypeptide is HTH-type transcriptional regulator LinR (linR) (Sphingobium indicum (strain DSM 16413 / CCM 7287 / MTCC 6362 / UT26 / NBRC 101211 / UT26S) (Sphingobium japonicum)).